A 431-amino-acid polypeptide reads, in one-letter code: MTQLKQARKGIVTPEMEAVAKTEGLQPEFILKGIADGNIVIPANKLRKNLKLCGIGKGLSTKVNANIGTSTDFGSVASEVEKLKMAEMVGADTIMDLSTGPKINTIRKAILENTCLPLGTVPVYQAAVEAKDHYGAMVKMTADDLFGAIESQAKEGVDFVTVHCGVTRQVIDTFKGQGRLTDIVSRGGTFTAGWMVFHGAENPLYEHFDRLLDICREYDVTLSLGDGLRPGCIADATDRAQVAELLVLGELVKRAREAEVQVMVEGPGHVPLNQIEANVRLQKSICEDAPFYVLGPLVTDIAPGYDHITGAIGGAIAAAAGADFLCYVTPAEHLSLPDVTDVRNGVIASRIAAHAADIVKGVNGAAERDHQMAIARKKLDWETQLKLSLDPEHARVTRDRFKTRGKACSMCGDFCAMELAEKHLGVSVSRC.

Residues asparagine 66, methionine 95, tyrosine 124, histidine 163, serine 185 to glycine 187, aspartate 226 to arginine 229, and glutamate 265 contribute to the substrate site. Histidine 269 serves as a coordination point for Zn(2+). Substrate is bound at residue tyrosine 292. Position 333 (histidine 333) interacts with Zn(2+). Positions 408, 411, and 415 each coordinate [4Fe-4S] cluster.

Belongs to the ThiC family. [4Fe-4S] cluster serves as cofactor.

It catalyses the reaction 5-amino-1-(5-phospho-beta-D-ribosyl)imidazole + S-adenosyl-L-methionine = 4-amino-2-methyl-5-(phosphooxymethyl)pyrimidine + CO + 5'-deoxyadenosine + formate + L-methionine + 3 H(+). It functions in the pathway cofactor biosynthesis; thiamine diphosphate biosynthesis. Functionally, catalyzes the synthesis of the hydroxymethylpyrimidine phosphate (HMP-P) moiety of thiamine from aminoimidazole ribotide (AIR) in a radical S-adenosyl-L-methionine (SAM)-dependent reaction. The chain is Phosphomethylpyrimidine synthase from Dehalococcoides mccartyi (strain CBDB1).